The following is a 382-amino-acid chain: MENKQCDHLTDWFSTTSDASESMDTTPPLPPPTPSVDPSYSGAAADEDLYSDISEGDLEYSDCDSASESDEDDDDCLIPSKEKAREVAASFGYTVIKTLTPGSEGRVMVATKDGQPEPVVLKIGQKGTTLIEAMMLRNVNHPSVIQMKDTLVSGAITCMVLPHYSSDLYTFLTKESRRIPIDQALIIEKQILEGLRYLHAQRIIHRDVKTENIFINSVDQVCIADFGAAQFPVVEPADLGLAGTVETNAPEVLARAKYNSKADIWSAGIVLFEMLAYPSTLFEDPPSTPEEYVKSCHSQLLKIISTLKINPEEFPRDPGSRLVRGYIEYSRLERNAYTRYPCFQRVNLHIDGEFLVHKMLAFNAAMRPSAEELLSYPMFAQL.

Positions 1–10 (MENKQCDHLT) are enriched in basic and acidic residues. The segment at 1 to 75 (MENKQCDHLT…ASESDEDDDD (75 aa)) is disordered. The segment covering 12 to 24 (WFSTTSDASESMD) has biased composition (polar residues). Residues 45 to 75 (ADEDLYSDISEGDLEYSDCDSASESDEDDDD) are compositionally biased toward acidic residues. The 287-residue stretch at 93-379 (YTVIKTLTPG…AEELLSYPMF (287 aa)) folds into the Protein kinase domain. Residues 99 to 107 (LTPGSEGRV) and Lys122 contribute to the ATP site. Asp207 (proton acceptor) is an active-site residue.

The protein belongs to the protein kinase superfamily. Ser/Thr protein kinase family.

The catalysed reaction is L-seryl-[protein] + ATP = O-phospho-L-seryl-[protein] + ADP + H(+). It carries out the reaction L-threonyl-[protein] + ATP = O-phospho-L-threonyl-[protein] + ADP + H(+). In Equus caballus (Horse), this protein is Serine/threonine-protein kinase (US2).